Here is a 145-residue protein sequence, read N- to C-terminus: D-aminoacyl-tRNA deacylase (145 aa).

A Gly-cisPro motif, important for rejection of L-amino acids motif is present at residues 133-134; that stretch reads GP.

This sequence belongs to the DTD family. Homodimer.

It localises to the cytoplasm. It carries out the reaction glycyl-tRNA(Ala) + H2O = tRNA(Ala) + glycine + H(+). It catalyses the reaction a D-aminoacyl-tRNA + H2O = a tRNA + a D-alpha-amino acid + H(+). An aminoacyl-tRNA editing enzyme that deacylates mischarged D-aminoacyl-tRNAs. Also deacylates mischarged glycyl-tRNA(Ala), protecting cells against glycine mischarging by AlaRS. Acts via tRNA-based rather than protein-based catalysis; rejects L-amino acids rather than detecting D-amino acids in the active site. By recycling D-aminoacyl-tRNA to D-amino acids and free tRNA molecules, this enzyme counteracts the toxicity associated with the formation of D-aminoacyl-tRNA entities in vivo and helps enforce protein L-homochirality. The polypeptide is D-aminoacyl-tRNA deacylase (Cutibacterium acnes (strain DSM 16379 / KPA171202) (Propionibacterium acnes)).